The chain runs to 500 residues: MFYAVQQSEHTETLVVGLFQKSQLTGKALEIDEMLEGHLTQLLKEGDVSAKPNQVSKVFPPSSAGMKRIYFVGLGREANYSFEQAKERFAHVFQAIHKDRKQETAVLLDTFISEDVPPADAAHALAESCLLASYEVQDYKHKSNEPDKQIEAVYVVTDEDTQEVQAGLRVGQAYGQGTNSARTLVNMPGNMLTATDLASYAEELAAKYDFECEILEKSEMEELGMGGILAVNQGSTEPPKMIVLKYQGKKEWEDVVGLVGKGITFDTGGYSIKTKSGIVGMKSDMGGAAAVLGAMETIGELRPEQNVLCVIPSTDNMISGGAMKPDDVIVSLSGKTIEILNTDAEGRLVLADGITYAKQHGASVLVDVATLTGGVVVALGTETTGAMTNDQSFYQQVADAAQECGEAIWQLPITEKDKKRVKSSQMADLSNSPGREGHAIMAGTFLGEFAESTPWVHLDIAGTATANKATCFGPAGATGVMARTLATLAERFTLEEDKNE.

Lys261 and Asp266 together coordinate Mn(2+). Lys273 is an active-site residue. Asp284, Asp343, and Glu345 together coordinate Mn(2+). The active site involves Arg347.

It belongs to the peptidase M17 family. Mn(2+) is required as a cofactor.

Its subcellular location is the cytoplasm. It catalyses the reaction Release of an N-terminal amino acid, Xaa-|-Yaa-, in which Xaa is preferably Leu, but may be other amino acids including Pro although not Arg or Lys, and Yaa may be Pro. Amino acid amides and methyl esters are also readily hydrolyzed, but rates on arylamides are exceedingly low.. It carries out the reaction Release of an N-terminal amino acid, preferentially leucine, but not glutamic or aspartic acids.. Presumably involved in the processing and regular turnover of intracellular proteins. Catalyzes the removal of unsubstituted N-terminal amino acids from various peptides. The protein is Probable cytosol aminopeptidase (pepA) of Bacillus subtilis (strain 168).